The sequence spans 404 residues: Zinc transporter 10 (404 aa).

The signal sequence occupies residues M1–A22. Over A23–K49 the chain is Extracellular. Residues M50–G70 form a helical membrane-spanning segment. Residues R71–S86 lie on the Cytoplasmic side of the membrane. A helical membrane pass occupies residues G87 to V107. The Extracellular segment spans residues H108–R129. A helical transmembrane segment spans residues F130–V150. At G151–H248 the chain is on the cytoplasmic side. Residues V249–S269 form a helical membrane-spanning segment. Residues L270–K280 lie on the Extracellular side of the membrane. A helical transmembrane segment spans residues P281–I301. The Cytoplasmic segment spans residues S302–A311. The helical transmembrane segment at F312 to V332 threads the bilayer. The Extracellular portion of the chain corresponds to A333–A343. A helical transmembrane segment spans residues L344–V364. Over D365–Q383 the chain is Cytoplasmic. The chain crosses the membrane as a helical span at residues V384 to A404.

This sequence belongs to the ZIP transporter (TC 2.A.5) family.

It localises to the cell membrane. Zinc transporter that may be involved in zinc uptake from the rhizosphere. This Oryza sativa subsp. japonica (Rice) protein is Zinc transporter 10 (ZIP10).